A 221-amino-acid polypeptide reads, in one-letter code: MNFLTNQLLIQEEIEALIKNLNKENTLWEDGKKTAGSHASMVKNNLQLNRESEISKKLSHLIKKKILSSPLIKSFALPKIIHGIMFTKSLKDMQYGRHIDNPFMSSGRADLSFTISLTDKNTYDGGELIIEEMNSEKEFKLNAGEIIIYPSTYLHSVKEIKNGERLVCVGWIESYVKSIEQREYLFDLDAGAKGLLAKNGRSDELDLIFKSYSNLLRLLGN.

Residues 80–174 (IIHGIMFTKS…RLVCVGWIES (95 aa)) enclose the Fe2OG dioxygenase domain. Residues histidine 98, aspartate 100, and histidine 155 each contribute to the Fe cation site. Arginine 165 contacts 2-oxoglutarate.

It depends on Fe(2+) as a cofactor. Requires L-ascorbate as cofactor.

The protein is PKHD-type hydroxylase PMT9312_1262 of Prochlorococcus marinus (strain MIT 9312).